A 128-amino-acid polypeptide reads, in one-letter code: Holo-[acyl-carrier-protein] synthase (128 aa).

Asp8 and Glu59 together coordinate Mg(2+).

This sequence belongs to the P-Pant transferase superfamily. AcpS family. Requires Mg(2+) as cofactor.

It is found in the cytoplasm. It carries out the reaction apo-[ACP] + CoA = holo-[ACP] + adenosine 3',5'-bisphosphate + H(+). Transfers the 4'-phosphopantetheine moiety from coenzyme A to a Ser of acyl-carrier-protein. This is Holo-[acyl-carrier-protein] synthase from Rickettsia typhi (strain ATCC VR-144 / Wilmington).